Here is a 361-residue protein sequence, read N- to C-terminus: Phospho-N-acetylmuramoyl-pentapeptide-transferase (361 aa).

10 helical membrane passes run 27-47 (ILAS…MIRW), 70-90 (GTPT…CLLW), 97-117 (SLWL…VDDY), 134-154 (YFWQ…NASL), 167-187 (TVTW…IVGS), 199-219 (GLAI…AYAS), 236-256 (TGEL…FLWY), 263-283 (VFMG…VAVV), 288-308 (LVLL…ILQV), and 338-358 (KVIV…LATL).

It belongs to the glycosyltransferase 4 family. MraY subfamily. Requires Mg(2+) as cofactor.

It localises to the cell inner membrane. The enzyme catalyses UDP-N-acetyl-alpha-D-muramoyl-L-alanyl-gamma-D-glutamyl-meso-2,6-diaminopimeloyl-D-alanyl-D-alanine + di-trans,octa-cis-undecaprenyl phosphate = di-trans,octa-cis-undecaprenyl diphospho-N-acetyl-alpha-D-muramoyl-L-alanyl-D-glutamyl-meso-2,6-diaminopimeloyl-D-alanyl-D-alanine + UMP. It participates in cell wall biogenesis; peptidoglycan biosynthesis. Catalyzes the initial step of the lipid cycle reactions in the biosynthesis of the cell wall peptidoglycan: transfers peptidoglycan precursor phospho-MurNAc-pentapeptide from UDP-MurNAc-pentapeptide onto the lipid carrier undecaprenyl phosphate, yielding undecaprenyl-pyrophosphoryl-MurNAc-pentapeptide, known as lipid I. The polypeptide is Phospho-N-acetylmuramoyl-pentapeptide-transferase (Legionella pneumophila (strain Lens)).